We begin with the raw amino-acid sequence, 902 residues long: 4-hydroxyphenylacetate decarboxylase glycyl radical subunit (902 aa).

The PFL domain maps to 38–774 (KRAEDLLDVY…ATLATPDGRL (737 aa)). 4-hydroxyphenylacetate is bound by residues S348 and C507. C507 acts as the Cysteine radical intermediate in catalysis. Residue E509 is the Proton donor of the active site. 4-hydroxyphenylacetate is bound by residues H540 and E641. The Glycine radical domain occupies 782-902 (GSVSAYAGTD…VIARTEYEGV (121 aa)). Glycine radical is present on G877.

It belongs to the glycyl radical enzyme (GRE) family. HPAD subfamily. Heterooctamer consisting of 4 large (HpdB) subunits and 4 small (HpdC) subunits, arranged as a tetramer of heterodimers. Also forms a catalytically inactive homodimer. In terms of processing, requires the activating protein CsdA to generate the key active site glycyl radical that is involved in catalysis. Phosphorylated on serine. Phosphorylation may trigger the formation of the active heterooctamers and thereby regulates enzyme activity.

It carries out the reaction 4-hydroxyphenylacetate + H(+) = 4-methylphenol + CO2. The catalysed reaction is 3,4-dihydroxyphenylacetate + H(+) = 4-methylcatechol + CO2. Functionally, glycyl radical subunit of the HPA decarboxylase that decarboxylates phenylacetates with a hydroxyl group in the p-position. Active toward 4-hydroxyphenylacetate and 3,4-dihydroxyphenylacetate, forming 4-methylphenol and 4-methylcatechol, respectively. Is likely involved in the catabolism of aromatic amino acids such as tyrosine fermentation. 4-methylphenol (p-cresol) formation provides metabolic toxicity, which allows an active suppression of other microbes and may provide growth advantages for the producers in highly competitive environments. The large subunit is the catalytic subunit that binds the substrate. This chain is 4-hydroxyphenylacetate decarboxylase glycyl radical subunit, found in Clostridioides difficile (strain CD196) (Peptoclostridium difficile).